The sequence spans 317 residues: Small ribosomal subunit protein uS2 (317 aa).

Ser2 carries the post-translational modification N-acetylserine. Laminin-binding regions lie at residues 161-180 (IPCN…MLSR) and 205-229 (RDPE…EFQG). 2 [DE]-W-[ST] repeats span residues 230-232 (EWT) and 245-247 (DWS). A laminin-binding region spans residues 242–317 (EVADWSEGVA…EWGGASADWS (76 aa)). The span at 271–284 (EAAAPSKAPAAAEG) shows a compositional bias: low complexity. The tract at residues 271-317 (EAAAPSKAPAAAEGFAEDWSAQPATEDWSAAPTAQATEWGGASADWS) is disordered. 3 [DE]-W-[ST] repeats span residues 288 to 290 (DWS), 297 to 299 (DWS), and 315 to 317 (DWS).

The protein belongs to the universal ribosomal protein uS2 family. In terms of assembly, monomer (37LRP) and homodimer (67LR). Component of the small ribosomal subunit. Mature ribosomes consist of a small (40S) and a large (60S) subunit. The 40S subunit contains about 33 different proteins and 1 molecule of RNA (18S). The 60S subunit contains about 49 different proteins and 3 molecules of RNA (28S, 5.8S and 5S). Interacts with rps21. Interacts with several laminins including at least lamb1. Interacts with mdk. In terms of processing, acylated. Acylation may be a prerequisite for conversion of the monomeric 37 kDa laminin receptor precursor (37LRP) to the mature dimeric 67 kDa laminin receptor (67LR), and may provide a mechanism for membrane association. Post-translationally, cleaved by stromelysin-3 (ST3) at the cell surface. Cleavage by stromelysin-3 may be a mechanism to alter cell-extracellular matrix interactions.

Its subcellular location is the cell membrane. It localises to the cytoplasm. The protein localises to the nucleus. In terms of biological role, required for the assembly and/or stability of the 40S ribosomal subunit. Required for the processing of the 20S rRNA-precursor to mature 18S rRNA in a late step of the maturation of 40S ribosomal subunits. Also functions as a cell surface receptor for laminin. Plays a role in cell adhesion to the basement membrane and in the consequent activation of signaling transduction pathways. May play a role in cell fate determination and tissue morphogenesis. In Salmo salar (Atlantic salmon), this protein is Small ribosomal subunit protein uS2 (rpsa).